A 280-amino-acid chain; its full sequence is Shikimate dehydrogenase (NADP(+)) (280 aa).

Shikimate-binding positions include 20–22 (TLS) and threonine 67. The active-site Proton acceptor is lysine 71. Shikimate-binding residues include asparagine 92 and aspartate 107. NADP(+) is bound by residues 131–135 (GAGGA), 154–159 (NRTIDK), and leucine 224. Residue tyrosine 226 participates in shikimate binding. Glycine 247 contributes to the NADP(+) binding site.

Belongs to the shikimate dehydrogenase family. In terms of assembly, homodimer.

It catalyses the reaction shikimate + NADP(+) = 3-dehydroshikimate + NADPH + H(+). Its pathway is metabolic intermediate biosynthesis; chorismate biosynthesis; chorismate from D-erythrose 4-phosphate and phosphoenolpyruvate: step 4/7. In terms of biological role, involved in the biosynthesis of the chorismate, which leads to the biosynthesis of aromatic amino acids. Catalyzes the reversible NADPH linked reduction of 3-dehydroshikimate (DHSA) to yield shikimate (SA). In Carboxydothermus hydrogenoformans (strain ATCC BAA-161 / DSM 6008 / Z-2901), this protein is Shikimate dehydrogenase (NADP(+)).